A 241-amino-acid chain; its full sequence is Eukaryotic translation initiation factor 3 subunit J (241 aa).

Residues 1-27 (MEEDWEQHGEKEEVPLPAKKPDANKWD) are compositionally biased toward basic and acidic residues. The tract at residues 1–99 (MEEDWEQHGE…ENMTPEQKLA (99 aa)) is disordered. Over residues 28–45 (GEDEEEEVKDSWEDEDEL) the composition is skewed to acidic residues. Residues 31–119 (EEEEVKDSWE…ESDLKNALDT (89 aa)) are a coiled coil. Composition is skewed to basic and acidic residues over residues 46-58 (EEKK…ETPK) and 69-90 (IVEK…KEAE).

The protein belongs to the eIF-3 subunit J family. In terms of assembly, component of the eukaryotic translation initiation factor 3 (eIF-3) complex.

The protein localises to the cytoplasm. In terms of biological role, component of the eukaryotic translation initiation factor 3 (eIF-3) complex, which is involved in protein synthesis of a specialized repertoire of mRNAs and, together with other initiation factors, stimulates binding of mRNA and methionyl-tRNAi to the 40S ribosome. The eIF-3 complex specifically targets and initiates translation of a subset of mRNAs involved in cell proliferation. In Culex quinquefasciatus (Southern house mosquito), this protein is Eukaryotic translation initiation factor 3 subunit J.